Reading from the N-terminus, the 278-residue chain is Digeranylgeranylglyceryl phosphate synthase (278 aa).

8 consecutive transmembrane segments (helical) span residues 12–32 (LKNC…ASYF), 34–54 (LATV…CGFG), 91–111 (LLVF…LMAV), 129–149 (IIGN…GGIA), 153–173 (IDVT…REII), 204–224 (FLLV…FFGI), 225–245 (YYML…YNLV), and 257–277 (SRNI…GSLF).

Belongs to the UbiA prenyltransferase family. DGGGP synthase subfamily. The cofactor is Mg(2+).

It localises to the cell membrane. It catalyses the reaction sn-3-O-(geranylgeranyl)glycerol 1-phosphate + (2E,6E,10E)-geranylgeranyl diphosphate = 2,3-bis-O-(geranylgeranyl)-sn-glycerol 1-phosphate + diphosphate. Its pathway is membrane lipid metabolism; glycerophospholipid metabolism. Functionally, prenyltransferase that catalyzes the transfer of the geranylgeranyl moiety of geranylgeranyl diphosphate (GGPP) to the C2 hydroxyl of (S)-3-O-geranylgeranylglyceryl phosphate (GGGP). This reaction is the second ether-bond-formation step in the biosynthesis of archaeal membrane lipids. This Methanococcus maripaludis (strain C7 / ATCC BAA-1331) protein is Digeranylgeranylglyceryl phosphate synthase.